The sequence spans 23 residues: Acidic phospholipase A2 Ts-A2 (23 aa).

Requires Ca(2+) as cofactor. In terms of processing, contains 7 disulfide bonds. As to expression, expressed by the venom gland.

The protein resides in the secreted. It catalyses the reaction a 1,2-diacyl-sn-glycero-3-phosphocholine + H2O = a 1-acyl-sn-glycero-3-phosphocholine + a fatty acid + H(+). Exhibits moderate hydrolytic activities and prefers the anionic micelles (dPPC with deoxycholate) to the zwitterionic micelles (dPPC with Triton X-100). PLA2 catalyzes the calcium-dependent hydrolysis of the 2-acyl groups in 3-sn-phosphoglycerides. The sequence is that of Acidic phospholipase A2 Ts-A2 from Trimeresurus stejnegeri (Chinese green tree viper).